Consider the following 214-residue polypeptide: Urease accessory protein UreG (214 aa).

23-30 (GPVGSGKT) serves as a coordination point for GTP.

Belongs to the SIMIBI class G3E GTPase family. UreG subfamily. In terms of assembly, homodimer. UreD, UreF and UreG form a complex that acts as a GTP-hydrolysis-dependent molecular chaperone, activating the urease apoprotein by helping to assemble the nickel containing metallocenter of UreC. The UreE protein probably delivers the nickel.

It localises to the cytoplasm. In terms of biological role, facilitates the functional incorporation of the urease nickel metallocenter. This process requires GTP hydrolysis, probably effectuated by UreG. The polypeptide is Urease accessory protein UreG (Bordetella bronchiseptica (strain ATCC BAA-588 / NCTC 13252 / RB50) (Alcaligenes bronchisepticus)).